Consider the following 325-residue polypeptide: uncharacterized protein (325 aa).

The Proton donor role is filled by tyrosine 59. Position 117 (histidine 117) interacts with substrate.

Belongs to the aldo/keto reductase family.

The protein resides in the cytoplasm. Its subcellular location is the nucleus. This is an uncharacterized protein from Schizosaccharomyces pombe (strain 972 / ATCC 24843) (Fission yeast).